Reading from the N-terminus, the 361-residue chain is Cysteine-rich with EGF-like domain protein 2-A (361 aa).

An N-terminal signal peptide occupies residues 1–24 (MNGSRALHLSAWLLLCLLCSAAVA). One can recognise an EGF-like 1 domain in the interval 134-176 (DCLACLGGSERPCHGNGFCNGDGTRSGDGLCRCEAEYTGPFCL). 3 disulfide bridges follow: Cys138-Cys152, Cys146-Cys164, and Cys166-Cys175. Asn188 is a glycosylation site (N-linked (GlcNAc...) asparagine). 2 FU repeats span residues 191-238 (YSLC…EESP) and 251-298 (SFLC…SEQV). In terms of domain architecture, EGF-like 2; calcium-binding spans 288-329 (DVDECDASEQVCSRENETCLNTAGSYKCTCSEGFEDKEGNCV). Intrachain disulfides connect Cys292/Cys306, Cys299/Cys315, and Cys317/Cys328. Residue Asn303 is glycosylated (N-linked (GlcNAc...) asparagine). The segment at 341–361 (DGEMGTSASDINISNTAHEDL) is disordered. Positions 346 to 361 (TSASDINISNTAHEDL) are enriched in polar residues. Residue Asn352 is glycosylated (N-linked (GlcNAc...) asparagine).

Belongs to the CRELD family.

The protein resides in the secreted. It localises to the endoplasmic reticulum. In terms of biological role, possible role in neuronal acetylcholine receptor transport. This chain is Cysteine-rich with EGF-like domain protein 2-A (creld2-a), found in Xenopus laevis (African clawed frog).